The chain runs to 1171 residues: WD repeat-containing protein on Y chromosome (1171 aa).

WD repeat units lie at residues 157-201 (EIPE…LRSA), 331-370 (RIPLGVSVFYVAESKNILVTGGPDTFVRIWDVYISSEPSA), 374-413 (GHNGGIVAVFVQPEENKVYSVDYHKVIKVWDLQEHTLLQT), 464-503 (THAAPVSVVLYNRLFRNIVTCGLDSYIIVWDPWTGRRKII), 516-555 (IIDIEITAACFDPLEQFLLTGARDGSLKIWNYNNAVVVRN), 603-643 (FHTD…RRYN), 748-787 (KVGDCVLTMASDRKNRFLYTGTAFGYIKIWHIVNYCIPQA), and 831-870 (GHLKAINSIGFINLPKILFTGSHDYSCRLWTQGGRYLGTL). The segment at 1076–1171 (RTSFTLSDYT…TNTMKSSNSH (96 aa)) is disordered. Composition is skewed to polar residues over residues 1094–1106 (SSRNMKSNLSSGS) and 1161–1171 (KTNTMKSSNSH).

The sequence is that of WD repeat-containing protein on Y chromosome from Drosophila grimshawi (Hawaiian fruit fly).